The sequence spans 649 residues: Beta-galactosidase-1-like protein 3 (649 aa).

Glu203 acts as the Proton donor in catalysis. Glu277 serves as the catalytic Nucleophile.

This sequence belongs to the glycosyl hydrolase 35 family.

In Mus musculus (Mouse), this protein is Beta-galactosidase-1-like protein 3 (Glb1l3).